An 834-amino-acid chain; its full sequence is Ras GTPase-activating protein 3 (834 aa).

2 C2 domains span residues 1 to 112 (MAVE…DTWF) and 123 to 263 (VQGK…EAWY). Residue alanine 2 is modified to N-acetylalanine. The residue at position 66 (tyrosine 66) is a Phosphotyrosine. Serine 77 bears the Phosphoserine mark. At threonine 110 the chain carries Phosphothreonine. Residues 346–561 (GRVVPFISAI…DAVKNFLDLI (216 aa)) form the Ras-GAP domain. Residues 576-677 (ILLKEGFMIK…WIDILTKVSQ (102 aa)) form the PH domain. The Btk-type zinc-finger motif lies at 679 to 715 (NQKRLTVFHPSAYLNGHWLCCRASSDTAIGCTPCTGG). Zn(2+)-binding residues include histidine 687, cysteine 698, cysteine 699, and cysteine 709. A phosphoserine mark is found at serine 809 and serine 833.

In terms of biological role, inhibitory regulator of the Ras-cyclic AMP pathway. Binds inositol tetrakisphosphate (IP4). The chain is Ras GTPase-activating protein 3 (Rasa3) from Rattus norvegicus (Rat).